The primary structure comprises 430 residues: MKLITILLLCSRLLPSLAQEEGAQELNCNDETVFQAVDTALKKYNAELESGNQFVLYRVTEGTKKDGAETLYSFKYQIKEGNCSVQSGLTWQDCDFKDAEEAATGECTTTLGKKENKFSVATQICNITPGKGPKKTEEDLCVGCFQPIPMDSSDLKPVLKHAVEHFNNNTKHTHLFALREVKSAHSQVVAGMNYKIIYSIVQTNCSKEDFPSLREDCVPLPYGDHGECTGHTHVDIHNTIAGFSQSCDLYPGDDLFELLPKNCRGCPREIPVDSPELKEALGHSIAQLNAQHNHIFYFKIDTVKKATSQVVAGVIYVIEFIARETNCSKQSKTELTADCETKHLGQSLNCNANVYMRPWENKVVPTVRCQALDMMISRPPGFSPFRLVRVQETKEGTTRLLNSCEYKGRLSKARAGPAPDHQAEASTVTP.

The N-terminal stretch at 1–18 (MKLITILLLCSRLLPSLA) is a signal peptide. Residue Gln19 is modified to Pyrrolidone carboxylic acid. One can recognise a Cystatin kininogen-type 1 domain in the interval 28–131 (CNDETVFQAV…TQICNITPGK (104 aa)). 9 cysteine pairs are disulfide-bonded: Cys28-Cys404, Cys83-Cys94, Cys107-Cys125, Cys141-Cys144, Cys205-Cys217, Cys228-Cys247, Cys263-Cys266, Cys327-Cys339, and Cys350-Cys369. Asn82 carries N-linked (GlcNAc...) asparagine glycosylation. Residues 150–253 (MDSSDLKPVL…SQSCDLYPGD (104 aa)) enclose the Cystatin kininogen-type 2 domain. 2 N-linked (GlcNAc...) asparagine glycosylation sites follow: Asn168 and Asn204. The region spanning 272 to 375 (VDSPELKEAL…TVRCQALDMM (104 aa)) is the Cystatin kininogen-type 3 domain. An N-linked (GlcNAc...) asparagine glycan is attached at Asn326. Positions 411 to 430 (SKARAGPAPDHQAEASTVTP) are disordered.

Post-translationally, as T-kinin is preceded by a Met instead of an Arg or Lys, it is not released from its precursor by either tissue or plasma kallikrein. Plasma.

The protein localises to the secreted. It is found in the extracellular space. Kininogens are plasma glycoproteins with a number of functions: (1) as precursor of the active peptide bradykinin they effect smooth muscle contraction, induction of hypotension and increase of vascular permeability. (2) They play a role in blood coagulation by helping to position optimally prekallikrein and factor XI next to factor XII. (3) They are inhibitor of thiol proteases. This is T-kininogen 1 (Map1) from Rattus norvegicus (Rat).